A 376-amino-acid polypeptide reads, in one-letter code: Cytochrome-c peroxidase IdrP1 (376 aa).

The N-terminal stretch at 1–24 (MGHIRSIRLALAVAAVCTAASAAA) is a signal peptide. 2 Cytochrome c domains span residues 49–157 (DKVA…AAFK) and 203–354 (AEAQ…EALS). 6 residues coordinate heme c: cysteine 71, cysteine 74, histidine 75, cysteine 218, cysteine 221, and histidine 222.

As to quaternary structure, the iodate reductase (Idr) complex is composed of a molybdopterin-dependent iodate reductase (IdrA and IdrB subunits) and two associated peroxidases (IdrP1 and IdrP2). Heme c serves as cofactor.

The protein resides in the periplasm. The enzyme catalyses 2 Fe(II)-[cytochrome c] + H2O2 + 2 H(+) = 2 Fe(III)-[cytochrome c] + 2 H2O. In terms of biological role, involved in iodate respiration. May play a critical role in detoxification of inadvertent H(2)O(2) generated by the iodate reductase IdrA/IdrB. The sequence is that of Cytochrome-c peroxidase IdrP1 from Denitromonas iodatirespirans.